The following is a 282-amino-acid chain: Bifunctional protein FolD (282 aa).

NADP(+) contacts are provided by residues 165-167 and Ser190; that span reads GRS.

It belongs to the tetrahydrofolate dehydrogenase/cyclohydrolase family. In terms of assembly, homodimer.

The catalysed reaction is (6R)-5,10-methylene-5,6,7,8-tetrahydrofolate + NADP(+) = (6R)-5,10-methenyltetrahydrofolate + NADPH. It catalyses the reaction (6R)-5,10-methenyltetrahydrofolate + H2O = (6R)-10-formyltetrahydrofolate + H(+). It functions in the pathway one-carbon metabolism; tetrahydrofolate interconversion. In terms of biological role, catalyzes the oxidation of 5,10-methylenetetrahydrofolate to 5,10-methenyltetrahydrofolate and then the hydrolysis of 5,10-methenyltetrahydrofolate to 10-formyltetrahydrofolate. This is Bifunctional protein FolD from Acinetobacter baumannii (strain ATCC 17978 / DSM 105126 / CIP 53.77 / LMG 1025 / NCDC KC755 / 5377).